Consider the following 188-residue polypeptide: Ribosome maturation factor RimM (188 aa).

The PRC barrel domain maps to 103-177; it reads EEGWYYADLI…RVVIDPPAGT (75 aa).

This sequence belongs to the RimM family. Binds ribosomal protein uS19.

The protein resides in the cytoplasm. An accessory protein needed during the final step in the assembly of 30S ribosomal subunit, possibly for assembly of the head region. Essential for efficient processing of 16S rRNA. May be needed both before and after RbfA during the maturation of 16S rRNA. It has affinity for free ribosomal 30S subunits but not for 70S ribosomes. This is Ribosome maturation factor RimM from Parvibaculum lavamentivorans (strain DS-1 / DSM 13023 / NCIMB 13966).